The following is a 354-amino-acid chain: Anthranilate phosphoribosyltransferase (354 aa).

Residues glycine 94, 97 to 98 (GD), threonine 102, 104 to 107 (NIST), 122 to 130 (KHGNRAASS), and serine 134 contribute to the 5-phospho-alpha-D-ribose 1-diphosphate site. Anthranilate is bound at residue glycine 94. Serine 106 lines the Mg(2+) pocket. Asparagine 125 contributes to the anthranilate binding site. Arginine 180 provides a ligand contact to anthranilate. Positions 238 and 239 each coordinate Mg(2+).

This sequence belongs to the anthranilate phosphoribosyltransferase family. In terms of assembly, homodimer. Mg(2+) serves as cofactor.

It carries out the reaction N-(5-phospho-beta-D-ribosyl)anthranilate + diphosphate = 5-phospho-alpha-D-ribose 1-diphosphate + anthranilate. Its pathway is amino-acid biosynthesis; L-tryptophan biosynthesis; L-tryptophan from chorismate: step 2/5. Functionally, catalyzes the transfer of the phosphoribosyl group of 5-phosphorylribose-1-pyrophosphate (PRPP) to anthranilate to yield N-(5'-phosphoribosyl)-anthranilate (PRA). This is Anthranilate phosphoribosyltransferase from Streptomyces avermitilis (strain ATCC 31267 / DSM 46492 / JCM 5070 / NBRC 14893 / NCIMB 12804 / NRRL 8165 / MA-4680).